The chain runs to 110 residues: Large ribosomal subunit protein uL22 (110 aa).

Belongs to the universal ribosomal protein uL22 family. In terms of assembly, part of the 50S ribosomal subunit.

This protein binds specifically to 23S rRNA; its binding is stimulated by other ribosomal proteins, e.g. L4, L17, and L20. It is important during the early stages of 50S assembly. It makes multiple contacts with different domains of the 23S rRNA in the assembled 50S subunit and ribosome. Its function is as follows. The globular domain of the protein is located near the polypeptide exit tunnel on the outside of the subunit, while an extended beta-hairpin is found that lines the wall of the exit tunnel in the center of the 70S ribosome. In Pseudomonas aeruginosa (strain LESB58), this protein is Large ribosomal subunit protein uL22.